The sequence spans 737 residues: Zinc finger protein 280C (737 aa).

Residues K5, K10, K14, K33, and K55 each participate in a glycyl lysine isopeptide (Lys-Gly) (interchain with G-Cter in SUMO2) cross-link. Residues 57 to 66 are compositionally biased toward polar residues; it reads AISNILNRGH. Positions 57-137 are disordered; the sequence is AISNILNRGH…DFTKNSQVGS (81 aa). K75 participates in a covalent cross-link: Glycyl lysine isopeptide (Lys-Gly) (interchain with G-Cter in SUMO2). Residue S80 is modified to Phosphoserine. Residues 112–123 show a composition bias toward polar residues; it reads SKSSQSSVTVEN. Residues K113, K126, K167, K174, K180, and K187 each participate in a glycyl lysine isopeptide (Lys-Gly) (interchain with G-Cter in SUMO2) cross-link. Positions 176 to 185 are enriched in polar residues; it reads PSTSKVNSVT. A disordered region spans residues 176-223; sequence PSTSKVNSVTPKKPKTSEDVPQINPSTSLPLIGSPPVTSSQVMLSKGT. Positions 211–223 are enriched in polar residues; the sequence is PVTSSQVMLSKGT. T223 carries the post-translational modification Phosphothreonine. At S227 the chain carries Phosphoserine. A Glycyl lysine isopeptide (Lys-Gly) (interchain with G-Cter in SUMO2) cross-link involves residue K273. 5 consecutive C2H2-type zinc fingers follow at residues 316–338, 353–376, 383–406, 413–436, and 470–492; these read FKCFSCSKVLKNNIRFMNHMKHH, TTCQHCYRQYPTPFQLQCHIESTH, TICKICELSFETEHILLQHMKDTH, YVCQVCQFRSSTFSDVEAHFRAAH, and HRCPKCRLQFLTSKEKAEHKAQH. Residue K522 forms a Glycyl lysine isopeptide (Lys-Gly) (interchain with G-Cter in SUMO2) linkage. Polar residues predominate over residues 535–579; sequence SFLQVTPPTSQNTTARNPRKSNASRSKTSKLHATTSTASKVNTSK. A disordered region spans residues 535-602; that stretch reads SFLQVTPPTS…YKQKRQRNRK (68 aa). T540 is subject to Phosphothreonine. Glycyl lysine isopeptide (Lys-Gly) (interchain with G-Cter in SUMO2) cross-links involve residues K564 and K574. Over residues 580–602 the composition is skewed to basic residues; that stretch reads PRGRIAKSKAKPSYKQKRQRNRK.

Its subcellular location is the nucleus. Its function is as follows. May function as a transcription factor. The protein is Zinc finger protein 280C (ZNF280C) of Homo sapiens (Human).